Consider the following 436-residue polypeptide: Citrate synthase (436 aa).

Residues H311 and D370 contribute to the active site.

It belongs to the citrate synthase family.

The catalysed reaction is oxaloacetate + acetyl-CoA + H2O = citrate + CoA + H(+). It functions in the pathway carbohydrate metabolism; tricarboxylic acid cycle; isocitrate from oxaloacetate: step 1/2. This chain is Citrate synthase (gltA), found in Rickettsia typhi (strain ATCC VR-144 / Wilmington).